The following is a 476-amino-acid chain: Bifunctional protein HldE (476 aa).

The tract at residues 1–318 is ribokinase; it reads MFQYSAEFKQ…ENAIHGRSNT (318 aa). 195 to 198 contributes to the ATP binding site; the sequence is NMSE. Asp264 is an active-site residue. Positions 344 to 476 are cytidylyltransferase; it reads MTNGCFDILH…VISKIQQLKD (133 aa).

This sequence in the N-terminal section; belongs to the carbohydrate kinase PfkB family. The protein in the C-terminal section; belongs to the cytidylyltransferase family. As to quaternary structure, homodimer.

It carries out the reaction D-glycero-beta-D-manno-heptose 7-phosphate + ATP = D-glycero-beta-D-manno-heptose 1,7-bisphosphate + ADP + H(+). It catalyses the reaction D-glycero-beta-D-manno-heptose 1-phosphate + ATP + H(+) = ADP-D-glycero-beta-D-manno-heptose + diphosphate. The protein operates within nucleotide-sugar biosynthesis; ADP-L-glycero-beta-D-manno-heptose biosynthesis; ADP-L-glycero-beta-D-manno-heptose from D-glycero-beta-D-manno-heptose 7-phosphate: step 1/4. Its pathway is nucleotide-sugar biosynthesis; ADP-L-glycero-beta-D-manno-heptose biosynthesis; ADP-L-glycero-beta-D-manno-heptose from D-glycero-beta-D-manno-heptose 7-phosphate: step 3/4. It participates in bacterial outer membrane biogenesis; LPS core biosynthesis. Catalyzes the phosphorylation of D-glycero-D-manno-heptose 7-phosphate at the C-1 position to selectively form D-glycero-beta-D-manno-heptose-1,7-bisphosphate. Functionally, catalyzes the ADP transfer from ATP to D-glycero-beta-D-manno-heptose 1-phosphate, yielding ADP-D-glycero-beta-D-manno-heptose. In Pasteurella multocida (strain Pm70), this protein is Bifunctional protein HldE.